Here is a 287-residue protein sequence, read N- to C-terminus: 4-hydroxybenzoate octaprenyltransferase (287 aa).

The next 8 helical transmembrane spans lie at 21–39 (PIGT…WLAA), 95–115 (VLAL…TMNP), 116–136 (LTIG…FMKR), 138–158 (IPIP…MAYA), 161–181 (ANAL…WTIA), 213–233 (IIGA…QLSE), 234–251 (LGSS…LFVY), and 264–284 (CFQA…GVVI).

Belongs to the UbiA prenyltransferase family. Mg(2+) serves as cofactor.

Its subcellular location is the cell inner membrane. It carries out the reaction all-trans-octaprenyl diphosphate + 4-hydroxybenzoate = 4-hydroxy-3-(all-trans-octaprenyl)benzoate + diphosphate. The protein operates within cofactor biosynthesis; ubiquinone biosynthesis. Its function is as follows. Catalyzes the prenylation of para-hydroxybenzoate (PHB) with an all-trans polyprenyl group. Mediates the second step in the final reaction sequence of ubiquinone-8 (UQ-8) biosynthesis, which is the condensation of the polyisoprenoid side chain with PHB, generating the first membrane-bound Q intermediate 3-octaprenyl-4-hydroxybenzoate. This chain is 4-hydroxybenzoate octaprenyltransferase, found in Aeromonas hydrophila subsp. hydrophila (strain ATCC 7966 / DSM 30187 / BCRC 13018 / CCUG 14551 / JCM 1027 / KCTC 2358 / NCIMB 9240 / NCTC 8049).